The sequence spans 717 residues: DNA ligase (717 aa).

NAD(+) contacts are provided by residues 44 to 48 (DAEYD), 93 to 94 (SL), and Glu127. Lys129 serves as the catalytic N6-AMP-lysine intermediate. 4 residues coordinate NAD(+): Arg150, Glu186, Lys302, and Lys326. Zn(2+) is bound by residues Cys431, Cys434, Cys455, and Cys461. The BRCT domain occupies 639 to 717 (TSGSPVVGKT…EDEWLELIGG (79 aa)).

Belongs to the NAD-dependent DNA ligase family. LigA subfamily. The cofactor is Mg(2+). It depends on Mn(2+) as a cofactor.

It carries out the reaction NAD(+) + (deoxyribonucleotide)n-3'-hydroxyl + 5'-phospho-(deoxyribonucleotide)m = (deoxyribonucleotide)n+m + AMP + beta-nicotinamide D-nucleotide.. Its function is as follows. DNA ligase that catalyzes the formation of phosphodiester linkages between 5'-phosphoryl and 3'-hydroxyl groups in double-stranded DNA using NAD as a coenzyme and as the energy source for the reaction. It is essential for DNA replication and repair of damaged DNA. The sequence is that of DNA ligase from Rhizobium rhizogenes (strain K84 / ATCC BAA-868) (Agrobacterium radiobacter).